Consider the following 71-residue polypeptide: Putative antitoxin VapB15 (71 aa).

Belongs to the UPF0330 family.

Functionally, possibly the antitoxin component of a type II toxin-antitoxin (TA) system. Its cognate toxin is VapC15 (Potential). This is Putative antitoxin VapB15 (vapB15) from Archaeoglobus fulgidus (strain ATCC 49558 / DSM 4304 / JCM 9628 / NBRC 100126 / VC-16).